Here is an 87-residue protein sequence, read N- to C-terminus: MEWKKEKFKKMFPNLFHEIEGSDLPTVLDHLEVCKTIEEAIEIIEYFEKRGEISKEYANFLKSNPSLLKSIIGTRERGEYTRRGLRD.

To A.fulgidus AF_0255 and AF_1348.

This is an uncharacterized protein from Archaeoglobus fulgidus (strain ATCC 49558 / DSM 4304 / JCM 9628 / NBRC 100126 / VC-16).